Reading from the N-terminus, the 235-residue chain is MRPSGRNNDQLRNLKVTHNFTKHAEGSVLIEFGDTKVICTASVVAGVPKFKKDSGEGWLTAEYGMLPRSTHTRMDREAARGKQSGRTQEIQRLIGRALRASVDLTAIGENTIKVDCDVIQADGGTRTASITGASLAIADAIEYMKQNGMLDEQANPLLSQVAAISVGIYNNEPVLDLDYDEDSNAETDMNVVMNSNGGIIEIQGTAEGKDFSEEEFAKMLGLAKKGIKEIFATVF.

Residues Arg86 and Gly124–Arg126 contribute to the phosphate site.

The protein belongs to the RNase PH family. As to quaternary structure, homohexameric ring arranged as a trimer of dimers.

It catalyses the reaction tRNA(n+1) + phosphate = tRNA(n) + a ribonucleoside 5'-diphosphate. Functionally, phosphorolytic 3'-5' exoribonuclease that plays an important role in tRNA 3'-end maturation. Removes nucleotide residues following the 3'-CCA terminus of tRNAs; can also add nucleotides to the ends of RNA molecules by using nucleoside diphosphates as substrates, but this may not be physiologically important. Probably plays a role in initiation of 16S rRNA degradation (leading to ribosome degradation) during starvation. The sequence is that of Ribonuclease PH from Francisella tularensis subsp. tularensis (strain FSC 198).